We begin with the raw amino-acid sequence, 491 residues long: uncharacterized protein (491 aa).

266–273 (GIQGTGKS) is an ATP binding site.

Belongs to the AAA ATPase family. Highly divergent.

It is found in the plastid. Its subcellular location is the chloroplast. This is an uncharacterized protein from Porphyra purpurea (Red seaweed).